The chain runs to 878 residues: Leucine--tRNA ligase (878 aa).

The 'HIGH' region signature appears at 43 to 53 (PYPSGRIHIGH). Residues 630–634 (KMSKS) carry the 'KMSKS' region motif. Lysine 633 lines the ATP pocket.

This sequence belongs to the class-I aminoacyl-tRNA synthetase family.

The protein resides in the cytoplasm. The enzyme catalyses tRNA(Leu) + L-leucine + ATP = L-leucyl-tRNA(Leu) + AMP + diphosphate. This Nitrobacter hamburgensis (strain DSM 10229 / NCIMB 13809 / X14) protein is Leucine--tRNA ligase.